The sequence spans 182 residues: Adenine phosphoribosyltransferase (182 aa).

It belongs to the purine/pyrimidine phosphoribosyltransferase family. In terms of assembly, homodimer.

It is found in the cytoplasm. The catalysed reaction is AMP + diphosphate = 5-phospho-alpha-D-ribose 1-diphosphate + adenine. It functions in the pathway purine metabolism; AMP biosynthesis via salvage pathway; AMP from adenine: step 1/1. Functionally, catalyzes a salvage reaction resulting in the formation of AMP, that is energically less costly than de novo synthesis. This Streptomyces avermitilis (strain ATCC 31267 / DSM 46492 / JCM 5070 / NBRC 14893 / NCIMB 12804 / NRRL 8165 / MA-4680) protein is Adenine phosphoribosyltransferase.